We begin with the raw amino-acid sequence, 76 residues long: UPF0248 protein MMP0286 (76 aa).

It belongs to the UPF0248 family.

The protein is UPF0248 protein MMP0286 of Methanococcus maripaludis (strain DSM 14266 / JCM 13030 / NBRC 101832 / S2 / LL).